Reading from the N-terminus, the 1646-residue chain is MSINAVDSKKLVEALLGDLRLLSQEAKKKQNHVKEAAESGVVRIRNISTASVGDTVLITNLRAACTELLHPLVLSCETRHTRLVQIALQGIQRLVQHRILSQNGATIVTNELWSLVEAECEELRVLQTVPPLVSSELIVTGNTLAKCIVMCFRLHFAKDPIVINAASAAVRQLVSTVFERVIQEDGIFSTELTVVNPSGGRPSPRAAPPTLRPCAADAYMLFKDLCLLINGEAPIWLVGIQETTRTLGLELLESLLKGFPSVFIRHTEFGDLLKDDVCPLIIRLFSPNVKAMHISSQHPSSRTSNASFNNYPPTISHERQSFPISMRLVRIVTLIVQFYQTILHTECEIFISTLLKFVDGDRKGWQRPLALESLHRIVSSTDLVKWMTESFDCRPNSTHVLEQVAIGLSTVVQQCLVCTTFSSDQENEIDRSQEDGGPGFLSKGLWVPYVEHLTSKKTILLDSLDRMDAVAIPEGYVLSRCCVALCDMTQAVYAAIDKLCLVDENSEAGSSETKLEIAKVAYANSQPSILAAIGSLLAASTDEIVSDQLLCCLSTLISAGCRVGADADLHRSVYVLAIMSLPSPSYLNQFAGIAPPSPANKRDAPVSEQVFDLEAWPSTTQVTASGPPCPCPVVSTELWNKQVLLTSKNLQAARTFIASITTHIKELNNLWYLCMATCEHLSWLLAMRPTQVGQFERETRDDHSNVPTVVTNAALSDIAMLSSLMDKVAPAIAALPDKSFLSVIDALIRLSDESLAVAATGRESSLFPLAVLYKVCSLSLMRLQVFWQKAANHFIKVCNHTSVSMRDWAAVALTSLAKHAVKSKTSMDAKSQQEMIISSLLALCSIPHIQVRRRQLDCVMSLMQTDGAFLLSTSWPNVIQIISAIIDSDTECELSLVRQGYLGLRLVSSDFLQSIPFDCISGLVEAISRYSKQNTDQNISLSALTLLWTISDFIYRKMESVGNDASEAVWMVLYTCLSESCVDSRFAVRKSACQTLLQTVTAHGHALRSAAWHSVIWQIMIPLLDKVRSQTRCASTEKSNGELIMHHSRDTEQKQWTETCIHTISAISKIFNSQRKSLLALNDFGAVWEAFLGYLDWAACYENAELSLSAIRSYQEVLLGKISSQTLNVNSHEKSNGSDSTIDAITPELPQAQWVESWKVWLRISRGLARQGCAAMANSVNADSKSISSTPRMNSSSSSLASLAPGIYVPGPSHLTAILHVFPPLFDKVAKSITVDDLKYESLPAVLESMMNVPIPSEQAPFVLPSATTHLTPTQEALLEAVKIVFVECTLSGTSLRAAIPDQIRLLLKFASMATQRISPNKVAPGGQKSYRDYALTTIVPFSEYSLRIAIEFFTSTSQNPEVANSLIAIDIIKFLGEPLYMKYTCISASTWKLAATSLMSVLRTSIPYARQNPEVFRGLWSAICDTMERWLFTPNKSTRLAADERKRDELMECQAIEIIRSEMLAYASRLPQEDVQRLIALLHRGSISQIDSTDVLDSHTQRNELAKACFDALLMSSDGAHTNTEEDEGRGILGNVAVTSLLQRCTQVMSDFCKDWSAAGDLRLPRSRILEIISALQAVDSLIARLARDPKMTELYSHLVSLFPSVVDVMPCCHADPQLEHQLIKTIKSYQTLFLLQNIPQATVE.

It belongs to the MON2 family.

The protein localises to the golgi apparatus. May be required for traffic between late Golgi and early endosomes. The chain is Monensin-resistant homolog 2 (mon-2) from Caenorhabditis elegans.